Here is a 138-residue protein sequence, read N- to C-terminus: Small ribosomal subunit protein uS8 (138 aa).

The protein belongs to the universal ribosomal protein uS8 family. As to quaternary structure, part of the 30S ribosomal subunit. Contacts proteins S5 and S12.

Functionally, one of the primary rRNA binding proteins, it binds directly to 16S rRNA central domain where it helps coordinate assembly of the platform of the 30S subunit. The protein is Small ribosomal subunit protein uS8 of Thermus aquaticus.